An 872-amino-acid polypeptide reads, in one-letter code: Oxidation resistance protein 1 (872 aa).

Residues 1 to 86 (MSVTNLSWLK…QKKTLDKKDG (86 aa)) are disordered. A compositionally biased stretch (basic and acidic residues) spans 63–86 (RRSELKRFYTIDTGQKKTLDKKDG). S90 bears the Phosphoserine mark. The LysM domain maps to 98 to 141 (VKYTVESRDSLNSIALKFDTTPNELVQLNKLFSRAVVTGQVLYV). Position 118 is a phosphothreonine (T118). Low complexity predominate over residues 150–168 (VESSPSLSPISPLSPTSSE). Positions 150 to 187 (VESSPSLSPISPLSPTSSEAELEKTTTPDVVHPKEPTP) are disordered. Over residues 170 to 184 (ELEKTTTPDVVHPKE) the composition is skewed to basic and acidic residues. Residues S201, S202, and S204 each carry the phosphoserine modification. Positions 212 to 268 (EKFLKINCRYITSSKGTVSGVLLVTPNNIMFDPHKTDPLVQENGCEEYGIMCPMEEV) constitute a GRAM domain. Phosphoserine occurs at positions 294, 334, and 336. Positions 314 to 338 (SRIRDAANDSASTAPRSTEESLSED) are disordered. T341 is subject to Phosphothreonine. Residues S346 and S496 each carry the phosphoserine modification. The interval 549-576 (RRHRLHKFLCLRVRKPMRKTFVSQASAT) is mediates oxidative antimutator activity. The TLDc domain occupies 711-872 (HLLLPDQIIK…IQDIEIWAFK (162 aa)).

The protein belongs to the OXR1 family.

It localises to the mitochondrion. Functionally, may be involved in protection from oxidative damage. This Bos taurus (Bovine) protein is Oxidation resistance protein 1 (OXR1).